Reading from the N-terminus, the 320-residue chain is L-lactate dehydrogenase 2 (320 aa).

NAD(+)-binding residues include Val16, Asp37, Lys42, and Tyr69. Arg94 serves as a coordination point for substrate. NAD(+) is bound by residues Ser107, 124 to 126 (VTN), and Thr149. Residue 126 to 129 (NPVD) coordinates substrate. 154-157 (DTAR) provides a ligand contact to substrate. Residues Arg159 and His174 each coordinate beta-D-fructose 1,6-bisphosphate. His181 acts as the Proton acceptor in catalysis. Residue Thr235 participates in substrate binding.

It belongs to the LDH/MDH superfamily. LDH family. Homotetramer.

Its subcellular location is the cytoplasm. The catalysed reaction is (S)-lactate + NAD(+) = pyruvate + NADH + H(+). It functions in the pathway fermentation; pyruvate fermentation to lactate; (S)-lactate from pyruvate: step 1/1. Allosterically activated by fructose 1,6-bisphosphate (FBP). Catalyzes the conversion of lactate to pyruvate. The chain is L-lactate dehydrogenase 2 from Clostridium acetobutylicum (strain ATCC 824 / DSM 792 / JCM 1419 / IAM 19013 / LMG 5710 / NBRC 13948 / NRRL B-527 / VKM B-1787 / 2291 / W).